Consider the following 148-residue polypeptide: Phosphoribosyl-AMP cyclohydrolase (148 aa).

D91 contacts Mg(2+). C92 is a binding site for Zn(2+). Mg(2+) contacts are provided by D93 and D95. C109 and C116 together coordinate Zn(2+).

It belongs to the PRA-CH family. As to quaternary structure, homodimer. It depends on Mg(2+) as a cofactor. Zn(2+) is required as a cofactor.

It localises to the cytoplasm. The catalysed reaction is 1-(5-phospho-beta-D-ribosyl)-5'-AMP + H2O = 1-(5-phospho-beta-D-ribosyl)-5-[(5-phospho-beta-D-ribosylamino)methylideneamino]imidazole-4-carboxamide. It participates in amino-acid biosynthesis; L-histidine biosynthesis; L-histidine from 5-phospho-alpha-D-ribose 1-diphosphate: step 3/9. In terms of biological role, catalyzes the hydrolysis of the adenine ring of phosphoribosyl-AMP. The polypeptide is Phosphoribosyl-AMP cyclohydrolase (Rhodopseudomonas palustris (strain HaA2)).